Reading from the N-terminus, the 156-residue chain is Interleukin-36 receptor antagonist protein (156 aa).

Cysteines 9 and 155 form a disulfide.

Belongs to the IL-1 family. As to quaternary structure, interacts with cargo receptor TMED10; the interaction mediates the translocation from the cytoplasm into the ERGIC (endoplasmic reticulum-Golgi intermediate compartment) and thereby secretion. In terms of processing, removal of N-terminal methionine is necessary for full antagonistic activity. As to expression, highly abundant in embryonic tissue and tissues containing epithelial cells.

Its subcellular location is the cytoplasm. The protein resides in the secreted. In terms of biological role, inhibits the activity of interleukin-36 (IL36A,IL36B and IL36G) by binding to receptor IL1RL2/IL-36R and preventing its association with the coreceptor IL1RAP for signaling. Part of the IL-36 signaling system that is thought to be present in epithelial barriers and to take part in local inflammatory response; similar to the IL-1 system with which it shares the coreceptor. Proposed to play a role in skin inflammation. May be involved in the innate immune response to fungal pathogens. May activate an anti-inflammatory signaling pathway by recruiting SIGIRR. This chain is Interleukin-36 receptor antagonist protein, found in Mus musculus (Mouse).